The chain runs to 623 residues: Xaa-Pro aminopeptidase 1 (623 aa).

Position 77 (arginine 77) interacts with a peptide. Lysine 304 is modified (N6-acetyllysine). Residue histidine 395 coordinates a peptide. Positions 415, 426, and 489 each coordinate Mn(2+). Histidine 489, histidine 498, and glutamate 523 together coordinate a peptide. 2 residues coordinate Mn(2+): glutamate 523 and glutamate 537.

The protein belongs to the peptidase M24B family. In terms of assembly, homodimer. The cofactor is Mn(2+). In terms of tissue distribution, expressed in all tissues tested, including liver, adrenal decapsular tissue, adrenal capsular tissue, corpus luteum, testis, submandibular gland, thymus, brain, cerebellum and heart. Highest levels in testis.

Its subcellular location is the cytoplasm. The catalysed reaction is Release of any N-terminal amino acid, including proline, that is linked to proline, even from a dipeptide or tripeptide.. Inhibited by inositol hexakisphosphate. Functionally, metalloaminopeptidase that catalyzes the removal of a penultimate prolyl residue from the N-termini of peptides, such as Arg-Pro-Pro. Contributes to the degradation of bradykinin. The sequence is that of Xaa-Pro aminopeptidase 1 from Rattus norvegicus (Rat).